Consider the following 316-residue polypeptide: Olfactory receptor 4N4C (316 aa).

Residues 1–26 (MKIANNTVVTEFILLGLTQSQDIQLL) lie on the Cytoplasmic side of the membrane. The helical transmembrane segment at 27–47 (VFVLILIFYLIILPGNFLIIF) threads the bilayer. Residues 48–56 (TIRSDPGLT) are Extracellular-facing. Residues 57-77 (APLYLFLGNLAFLDASYSFIV) traverse the membrane as a helical segment. Over 78-99 (APRMLVDFLSEKKVISYRGCIT) the chain is Cytoplasmic. An intrachain disulfide couples Cys97 to Cys179. The chain crosses the membrane as a helical span at residues 100-120 (QLFFLHFLGGGEGLLLVVMAF). Residues 121–143 (DRYIAICRPLHCSTVMNPRACYA) are Extracellular-facing. The chain crosses the membrane as a helical span at residues 144–164 (MMLALWLGGFVHSIIQVVLIL). The Cytoplasmic segment spans residues 165-204 (RLPFCGPNQLDNFFCDVRQVIKLACTDMFVVELLMVFNSG). The chain crosses the membrane as a helical span at residues 205–225 (LMTLLCFLGLLASYAVILCHV). At 226–243 (RRAASEGKNKAMSTCTTR) the chain is on the extracellular side. Residues 244 to 264 (VIIILLMFGPAIFIYICPFRA) form a helical membrane-spanning segment. The Cytoplasmic segment spans residues 265–268 (LPAD). The chain crosses the membrane as a helical span at residues 269–289 (KMVSLFHTVIFPLMNPMIYTL). Residues 290–316 (RNQEVKTSMKRLLSRHVVCQVDFIIRN) are Extracellular-facing.

The protein belongs to the G-protein coupled receptor 1 family.

The protein localises to the membrane. In terms of biological role, odorant receptor. This Homo sapiens (Human) protein is Olfactory receptor 4N4C.